Reading from the N-terminus, the 3114-residue chain is Centromere protein F (3114 aa).

The segment at 1–481 is interaction with SNAP25 and required for localization to the cytoplasm; the sequence is MSWALEEWKE…IKENELRRSM (481 aa). Residues 13 to 131 are a coiled coil; it reads PTRALQKIQE…KSELERSQQA (119 aa). Residue S106 is modified to Phosphoserine. 3 positions are modified to phosphothreonine: T144, T151, and T154. Y158 is modified (phosphotyrosine). Positions 211 to 235 are enriched in polar residues; sequence QASSSVFSWQQEKTPSHLSSNSQRT. Residues 211 to 236 form a disordered region; sequence QASSSVFSWQQEKTPSHLSSNSQRTP. A phosphoserine mark is found at S242 and S276. A coiled-coil region spans residues 280-685; sequence LDQLKAQNQE…SVEIRNLHNV (406 aa). Residues S773, S783, S821, S834, S838, and S876 each carry the phosphoserine modification. Coiled-coil stretches lie at residues 899 to 989 and 1196 to 1244; these read VAET…LNQE and LEVK…IRGD. A phosphoserine mark is found at S1248, S1255, and S1259. Residues 1549-1646 are a coiled coil; it reads VEELESLCEV…ELEVARLQLQ (98 aa). 3 positions are modified to phosphoserine: S1651, S1652, and S1654. Disordered stretches follow at residues 1667–1690 and 1710–1746; these read RNES…KHDV and TETG…SECI. Over residues 1669–1690 the composition is skewed to basic and acidic residues; sequence ESCDISKEHTSETTERTPKHDV. Phosphoserine is present on S1726. Phosphothreonine is present on T1862. Phosphoserine is present on residues S1868 and S1892. Coiled-coil stretches lie at residues 1890–2078 and 2107–2891; these read NDSW…LQAR and LSST…LCSQ. The tract at residues 2026 to 2351 is interaction with NDE1 and NDEL1; sequence LLKDKTHLQE…ERELEIARTN (326 aa). 2 tandem repeats follow at residues 2111–2290 and 2293–2472. A 2 X 177 AA tandem repeats region spans residues 2111–2472; it reads QEEVHQLRRG…ACKAKEQNLS (362 aa). The sufficient for self-association stretch occupies residues 2392–2829; the sequence is SEKENLTNEL…QAAQEKQKTG (438 aa). The segment at 2392–3017 is sufficient for centromere localization; the sequence is SEKENLTNEL…ATRTSPRLAA (626 aa). Phosphoserine occurs at positions 2416 and 2417. K2779 bears the N6-acetyllysine mark. The tract at residues 2831 to 3017 is sufficient for nuclear localization; the sequence is VMDTKVDELT…ATRTSPRLAA (187 aa). The interval 2891-2977 is disordered; sequence QQSKQDSRGS…AEDTEGTEFE (87 aa). Residues S2900, S2911, S2922, and S2936 each carry the phosphoserine modification. The Nuclear localization signal signature appears at 2919-2936; sequence KRLSSGQNKASGKRQRSS. T2949 carries the post-translational modification Phosphothreonine. Phosphoserine occurs at positions 2952, 2998, 3023, and 3026. Residues 3024–3114 form a disordered region; it reads PLSLGKENLA…SNGSENCKVQ (91 aa). A compositionally biased stretch (polar residues) spans 3033 to 3045; it reads AESSKPTAGGSRS. Phosphoserine occurs at positions 3054, 3079, and 3083. A compositionally biased stretch (basic and acidic residues) spans 3079-3089; sequence SPTDSPREGLR. Residues 3105-3114 are compositionally biased toward polar residues; the sequence is SNGSENCKVQ. Cysteine methyl ester is present on C3111. The S-farnesyl cysteine moiety is linked to residue C3111. A propeptide spans 3112 to 3114 (removed in mature form); sequence KVQ.

The protein belongs to the centromere protein F family. In terms of assembly, interacts with and STX4 (via C-terminus). Interacts (via N-terminus) with RBL1, RBL2 and SNAP25. Self-associates. Interacts with CENP-E and BUBR1 (via C-terminus). Interacts (via C-terminus) with NDE1, NDEL1 and RB1. Post-translationally, hyperphosphorylated during mitosis.

It localises to the cytoplasm. Its subcellular location is the perinuclear region. The protein localises to the nucleus matrix. The protein resides in the chromosome. It is found in the centromere. It localises to the kinetochore. Its subcellular location is the cytoskeleton. The protein localises to the spindle. Required for kinetochore function and chromosome segregation in mitosis. Required for kinetochore localization of dynein, LIS1, NDE1 and NDEL1. Regulates recycling of the plasma membrane by acting as a link between recycling vesicles and the microtubule network though its association with STX4 and SNAP25. Acts as a potential inhibitor of pocket protein-mediated cellular processes during development by regulating the activity of RB proteins during cell division and proliferation. May play a regulatory or permissive role in the normal embryonic cardiomyocyte cell cycle and in promoting continued mitosis in transformed, abnormally dividing neonatal cardiomyocytes. Interaction with RB directs embryonic stem cells toward a cardiac lineage. Involved in the regulation of DNA synthesis and hence cell cycle progression, via its C-terminus. Has a potential role regulating skeletal myogenesis and in cell differentiation in embryogenesis. Involved in dendritic cell regulation of T-cell immunity against chlamydia. The sequence is that of Centromere protein F (CENPF) from Homo sapiens (Human).